The chain runs to 280 residues: Energy-coupling factor transporter ATP-binding protein EcfA2 (280 aa).

In terms of domain architecture, ABC transporter spans 3–245; it reads INLQNVSYTY…VSLLEKKQLG (243 aa). ATP is bound at residue 40-47; sequence GHTGSGKS.

It belongs to the ABC transporter superfamily. Energy-coupling factor EcfA family. Forms a stable energy-coupling factor (ECF) transporter complex composed of 2 membrane-embedded substrate-binding proteins (S component), 2 ATP-binding proteins (A component) and 2 transmembrane proteins (T component).

The protein localises to the cell membrane. Its function is as follows. ATP-binding (A) component of a common energy-coupling factor (ECF) ABC-transporter complex. Unlike classic ABC transporters this ECF transporter provides the energy necessary to transport a number of different substrates. This Streptococcus pyogenes serotype M3 (strain ATCC BAA-595 / MGAS315) protein is Energy-coupling factor transporter ATP-binding protein EcfA2.